The primary structure comprises 447 residues: Glutamyl-tRNA reductase (447 aa).

Substrate is bound by residues 49 to 52, serine 109, 114 to 116, and glutamine 120; these read TCNR and EQQ. The Nucleophile role is filled by cysteine 50. Position 189–194 (189–194) interacts with NADP(+); that stretch reads GAGSMG.

The protein belongs to the glutamyl-tRNA reductase family. In terms of assembly, homodimer.

It catalyses the reaction (S)-4-amino-5-oxopentanoate + tRNA(Glu) + NADP(+) = L-glutamyl-tRNA(Glu) + NADPH + H(+). The protein operates within porphyrin-containing compound metabolism; protoporphyrin-IX biosynthesis; 5-aminolevulinate from L-glutamyl-tRNA(Glu): step 1/2. Its function is as follows. Catalyzes the NADPH-dependent reduction of glutamyl-tRNA(Glu) to glutamate 1-semialdehyde (GSA). In Mycobacterium sp. (strain JLS), this protein is Glutamyl-tRNA reductase.